A 56-amino-acid chain; its full sequence is Large ribosomal subunit protein bL33 (56 aa).

The protein belongs to the bacterial ribosomal protein bL33 family.

This is Large ribosomal subunit protein bL33 from Actinobacillus succinogenes (strain ATCC 55618 / DSM 22257 / CCUG 43843 / 130Z).